We begin with the raw amino-acid sequence, 458 residues long: Histone acetyltransferase Tip60 homolog (458 aa).

The disordered stretch occupies residues 1-24; the sequence is MTEPKKEIIEDENHGISKKIPTDP. Residues 30–86 form the Tudor-knot domain; that stretch reads VTEGCRLLVMMASQEEERWAEVISRCRAANGSIKFYVHYIDCNRRLDEWVQSDRLNL. The segment at 94–123 is disordered; it reads KGGKKGAHLREENRDSNENEGKKSGRKRKI. Residues 101–116 are compositionally biased toward basic and acidic residues; that stretch reads HLREENRDSNENEGKK. The 279-residue stretch at 168–446 folds into the MYST-type HAT domain; the sequence is TRIRNVECIE…INPAALQWRP (279 aa). Residues 201–226 form a C2HC MYST-type zinc finger; that stretch reads IYICEFCLKYLKSKTCLKRHMEKCAM. Lys-268 carries the N6-acetyllysine; by autocatalysis modification. Acetyl-CoA contacts are provided by residues 311 to 313 and 318 to 324; these read ILV and QKKGYGS. The active-site Proton donor/acceptor is the Glu-344. Positions 348 and 357 each coordinate acetyl-CoA.

The protein belongs to the MYST (SAS/MOZ) family. As to quaternary structure, interacts with transcription-associated protein trr-1. Probably a component of a complex with histone acetyltransferase (HAT) activity, at least composed of mys-1 and trr-1. Autoacetylation at Lys-268 is required for binding histones with high affinity and for proper function.

The protein resides in the nucleus. The enzyme catalyses L-lysyl-[protein] + acetyl-CoA = N(6)-acetyl-L-lysyl-[protein] + CoA + H(+). Probable catalytic subunit of the Tip60 chromatin-remodeling complex. Plays a role in acetylation of nucleosomal histone H4 and perhaps also H2A, probably acting as a component of the Tip60 histone acetyltransferase complex. Acts in the determination of vulval and distal tip cell (DTC) precursor cell fates. Involved in the positive regulation of transcription factor daf-16, probably acting by histone acetylation; thereby modulating stress resistance. This is Histone acetyltransferase Tip60 homolog from Caenorhabditis elegans.